The primary structure comprises 316 residues: Pantothenate kinase (316 aa).

Residue 95–102 (GSVAVGKS) coordinates ATP.

This sequence belongs to the prokaryotic pantothenate kinase family.

It localises to the cytoplasm. It catalyses the reaction (R)-pantothenate + ATP = (R)-4'-phosphopantothenate + ADP + H(+). It participates in cofactor biosynthesis; coenzyme A biosynthesis; CoA from (R)-pantothenate: step 1/5. This is Pantothenate kinase from Serratia proteamaculans (strain 568).